A 199-amino-acid polypeptide reads, in one-letter code: Probable molybdenum cofactor guanylyltransferase (199 aa).

Residues 8–10, Lys-20, Asp-65, and Asp-96 contribute to the GTP site; that span reads LAG. Asp-96 is a Mg(2+) binding site.

The protein belongs to the MobA family. Mg(2+) serves as cofactor.

It localises to the cytoplasm. The enzyme catalyses Mo-molybdopterin + GTP + H(+) = Mo-molybdopterin guanine dinucleotide + diphosphate. Its function is as follows. Transfers a GMP moiety from GTP to Mo-molybdopterin (Mo-MPT) cofactor (Moco or molybdenum cofactor) to form Mo-molybdopterin guanine dinucleotide (Mo-MGD) cofactor. The protein is Probable molybdenum cofactor guanylyltransferase of Bacillus subtilis (strain 168).